The chain runs to 224 residues: dTTP/UTP pyrophosphatase (224 aa).

D77 (proton acceptor) is an active-site residue.

Belongs to the Maf family. YhdE subfamily. Requires a divalent metal cation as cofactor.

It is found in the cytoplasm. It catalyses the reaction dTTP + H2O = dTMP + diphosphate + H(+). The catalysed reaction is UTP + H2O = UMP + diphosphate + H(+). Nucleoside triphosphate pyrophosphatase that hydrolyzes dTTP and UTP. May have a dual role in cell division arrest and in preventing the incorporation of modified nucleotides into cellular nucleic acids. This chain is dTTP/UTP pyrophosphatase, found in Dehalococcoides mccartyi (strain ATCC BAA-2266 / KCTC 15142 / 195) (Dehalococcoides ethenogenes (strain 195)).